A 173-amino-acid chain; its full sequence is Transmembrane protein 278 (173 aa).

A compositionally biased stretch (acidic residues) spans 1-14 (MSEQERETEEDEGV). The interval 1-25 (MSEQERETEEDEGVASDTAPMLPRR) is disordered. Transmembrane regions (helical) follow at residues 31–51 (HISVLAPILATRGLGTLVLSG), 53–73 (ALVGFLLHLLLPGTVFLLVLL), and 107–127 (AALIVFGLLSLPPLVVLAAAA). The tract at residues 141–165 (DPARTPAPRRPPRSSGDLADGHPDE) is disordered.

Belongs to the TMEM88 family.

It is found in the membrane. The sequence is that of Transmembrane protein 278 (Tmem278) from Mus musculus (Mouse).